The primary structure comprises 325 residues: Elongation factor P--(R)-beta-lysine ligase (325 aa).

Residue 76 to 78 (SPE) coordinates substrate. ATP contacts are provided by residues 100–102 (RNE) and Asn109. Tyr118 contacts substrate. 244-245 (EL) contributes to the ATP binding site. Glu251 lines the substrate pocket. Gly300 is a binding site for ATP.

It belongs to the class-II aminoacyl-tRNA synthetase family. EpmA subfamily. Homodimer.

It carries out the reaction D-beta-lysine + L-lysyl-[protein] + ATP = N(6)-((3R)-3,6-diaminohexanoyl)-L-lysyl-[protein] + AMP + diphosphate + H(+). In terms of biological role, with EpmB is involved in the beta-lysylation step of the post-translational modification of translation elongation factor P (EF-P). Catalyzes the ATP-dependent activation of (R)-beta-lysine produced by EpmB, forming a lysyl-adenylate, from which the beta-lysyl moiety is then transferred to the epsilon-amino group of a conserved specific lysine residue in EF-P. This is Elongation factor P--(R)-beta-lysine ligase from Pectobacterium carotovorum subsp. carotovorum (strain PC1).